The primary structure comprises 562 residues: MLRSLALRTFANILGLSSRSGSTAAMSRNAVASRPHLYTTPIFYVNAAPHLGHVYSALLADVQHRYSAMCGIESKLSTGTDEHGMKVQQAASALGLDPQTFCSTVSLQFRTIFDALDISYTDFVRTTEPRHIEAVSRFWMTLEEQGYIYKGTYEGWYCTSDEAFLSEGQTAEHTDFEGNKIRVSLESGHQVHWVSEENYMFRLSSLRPALLNWLQTEPVHPAPFLKLVHHWLEEELPDLSVSRQRSRLSWGIPVPSDSSHVIYVWLDALVNYLTAAGYPNPQLAPWGPSTHLLGKDILRFHAIYWPAFLIAAGLPPPQKLLVHSHWTSEGTKMSKSLKNVVDPSDCIRRYTTDGLRYYLLRHGAPERDCDFTHRTARMLLNSELADALGGLLNRCTAPAINPMQHFPKFQYENFPVASRDQVHDLLGALQELPVEVDQWIKKFQVHKALECIDACVRRSNAFFQSQAPWKLQRGVEKEAALRDSVIYLTLEALRLYATLLHPAVPGLATVVLDRLGVPHKMRTLKKNTFLAATRGEICYFQAQTLGPDKGLLFPRLEKSEAF.

The transit peptide at 1 to 10 (MLRSLALRTF) directs the protein to the mitochondrion. Residues 43–53 (FYVNAAPHLGH) carry the 'HIGH' region motif. The short motif at 332 to 336 (KMSKS) is the 'KMSKS' region element. Residue Lys335 coordinates ATP.

It belongs to the class-I aminoacyl-tRNA synthetase family.

Its subcellular location is the mitochondrion matrix. The catalysed reaction is tRNA(Met) + L-methionine + ATP = L-methionyl-tRNA(Met) + AMP + diphosphate. This chain is Methionine--tRNA ligase, mitochondrial (mars2), found in Xenopus laevis (African clawed frog).